The sequence spans 358 residues: Serine/threonine-protein phosphatase 2A activator (358 aa).

The interval 1–20 is disordered; it reads MAEGERQPPPDSSEEAPPAT. Alanine 2 carries the N-acetylalanine modification. ATP contacts are provided by arginine 183, threonine 188, and glycine 189. Residues glycine 243 and aspartate 249 each coordinate Mg(2+). The ATP site is built by proline 339, glutamine 342, and histidine 343.

It belongs to the PTPA-type PPIase family. As to quaternary structure, associates with PP2A heterodimeric core enzyme PP2A(D), composed of a 36 kDa catalytic subunit (subunit C) and a 65 kDa constant regulatory subunit (PR65 or subunit A). Interacts with the catalytic subunit PPP2CA (via C-terminus). Interacts with PPP2CB. In terms of tissue distribution, widely expressed.

It is found in the cytoplasm. The protein localises to the nucleus. It carries out the reaction [protein]-peptidylproline (omega=180) = [protein]-peptidylproline (omega=0). In terms of biological role, PPIases accelerate the folding of proteins. It catalyzes the cis-trans isomerization of proline imidic peptide bonds in oligopeptides. Acts as a regulatory subunit for serine/threonine-protein phosphatase 2A (PP2A). Modulates PP2A activity or substrate specificity, probably by inducing a conformational change in the catalytic subunit, a proposed direct target of the PPIase. Can reactivate inactive phosphatase PP2A-phosphatase methylesterase complexes (PP2A(i)) in presence of ATP and Mg(2+). Reversibly stimulates the variable phosphotyrosyl phosphatase activity of PP2A core heterodimer PP2A(D) in presence of ATP and Mg(2+) (in vitro). The phosphotyrosyl phosphatase activity is dependent of an ATPase activity of the PP2A(D):PPP2R4 complex. Is involved in apoptosis; the function appears to be independent from PP2A. The polypeptide is Serine/threonine-protein phosphatase 2A activator (Homo sapiens (Human)).